The chain runs to 569 residues: Probable santalene synthase (569 aa).

The (2E)-geranyl diphosphate site is built by Arg-284, Asp-321, Asp-325, Arg-460, and Asn-463. The Mg(2+) site is built by Asp-321 and Asp-325. Positions 321 to 325 match the DDXXD motif motif; the sequence is DDAYD. Mg(2+) contacts are provided by Asn-463, Thr-467, and Glu-471.

It belongs to the terpene synthase family. Tpsb subfamily. Mg(2+) is required as a cofactor. The cofactor is Mn(2+).

Functionally, catalyzes the formation of santalene. The chain is Probable santalene synthase (SSY) from Santalum murrayanum (Bitter quandong).